A 413-amino-acid polypeptide reads, in one-letter code: CinA-like protein (413 aa).

This sequence belongs to the CinA family.

The sequence is that of CinA-like protein from Geobacter sulfurreducens (strain ATCC 51573 / DSM 12127 / PCA).